The sequence spans 348 residues: TEGPFFYIPMVNTSGVVRSPYEYPQYYLVNPAAYAILGAYMFFLIIIGFPVNFMTLYVTLEHKKLRTPLNYILLNLAVADLFMVIGGFTTTMYSSMHGYFVLGRLGCNMEGFSATLGGMISLWSLAVLAIERWVVVCKPISNFRFGENHAIMGVSLTWFMALACTVPPLVGWSRYIPEGMQCSCGIDYYTRAEGFNNESFVLYMFFCHFLVPLVIIFFCYGRLLCAVKEAAAAQQESETTQRAEREVTRMVIIMVIGFLVCWLPYASVAWFIFTHQGSEFGPLFMTIPAFFAKSSSIYNPMIYICMNKQFRNCMITTLFCGKNPFEGEEEGASSTKTEASSASSVSPA.

Residues 1-33 (TEGPFFYIPMVNTSGVVRSPYEYPQYYLVNPAA) are Extracellular-facing. An N-linked (GlcNAc...) asparagine glycan is attached at N12. Residues 34–58 (YAILGAYMFFLIIIGFPVNFMTLYV) form a helical membrane-spanning segment. Topologically, residues 59–70 (TLEHKKLRTPLN) are cytoplasmic. Residues 71-93 (YILLNLAVADLFMVIGGFTTTMY) traverse the membrane as a helical segment. Over 94 to 107 (SSMHGYFVLGRLGC) the chain is Extracellular. Residues C107 and C184 are joined by a disulfide bond. The helical transmembrane segment at 108 to 130 (NMEGFSATLGGMISLWSLAVLAI) threads the bilayer. A 'Ionic lock' involved in activated form stabilization motif is present at residues 131 to 133 (ERW). The Cytoplasmic portion of the chain corresponds to 131–149 (ERWVVVCKPISNFRFGENH). The chain crosses the membrane as a helical span at residues 150 to 170 (AIMGVSLTWFMALACTVPPLV). Over 171–199 (GWSRYIPEGMQCSCGIDYYTRAEGFNNES) the chain is Extracellular. The N-linked (GlcNAc...) asparagine glycan is linked to N197. Residues 200–221 (FVLYMFFCHFLVPLVIIFFCYG) traverse the membrane as a helical segment. Over 222 to 249 (RLLCAVKEAAAAQQESETTQRAEREVTR) the chain is Cytoplasmic. Residues 250–271 (MVIIMVIGFLVCWLPYASVAWF) form a helical membrane-spanning segment. Topologically, residues 272–283 (IFTHQGSEFGPL) are extracellular. A helical membrane pass occupies residues 284 to 305 (FMTIPAFFAKSSSIYNPMIYIC). K293 is modified (N6-(retinylidene)lysine). Topologically, residues 306–348 (MNKQFRNCMITTLFCGKNPFEGEEEGASSTKTEASSASSVSPA) are cytoplasmic. C320 carries the S-palmitoyl cysteine lipid modification. A disordered region spans residues 327–348 (GEEEGASSTKTEASSASSVSPA). The span at 332 to 348 (ASSTKTEASSASSVSPA) shows a compositional bias: low complexity.

It belongs to the G-protein coupled receptor 1 family. Opsin subfamily. Phosphorylated on some or all of the serine and threonine residues present in the C-terminal region. In terms of processing, contains one covalently linked retinal chromophore.

The protein localises to the membrane. The protein resides in the cell projection. It localises to the cilium. Its subcellular location is the photoreceptor outer segment. In terms of biological role, photoreceptor required for image-forming vision at low light intensity. While most salt water fish species use retinal as chromophore, most freshwater fish use 3-dehydroretinal, or a mixture of retinal and 3-dehydroretinal. Light-induced isomerization of 11-cis to all-trans retinal triggers a conformational change that activates signaling via G-proteins. Subsequent receptor phosphorylation mediates displacement of the bound G-protein alpha subunit by arrestin and terminates signaling. The protein is Rhodopsin (rho) of Sargocentron punctatissimum (Speckled squirrelfish).